Reading from the N-terminus, the 1025-residue chain is Interferon-induced helicase C domain-containing protein 1 (1025 aa).

CARD domains follow at residues alanine 7 to proline 97 and alanine 110 to asparagine 190. Glycyl lysine isopeptide (Lys-Gly) (interchain with G-Cter in ISG15) cross-links involve residues lysine 23 and lysine 43. Residues serine 273 to glutamine 297 form a disordered region. Over residues glycine 275–glutamine 297 the composition is skewed to polar residues. Residues serine 289, serine 291, and serine 302 each carry the phosphoserine modification. Positions alanine 317–isoleucine 510 constitute a Helicase ATP-binding domain. A phosphoserine mark is found at serine 645 and serine 648. The Helicase C-terminal domain maps to lysine 700–lysine 872. Serine 828 bears the Phosphoserine; by RIOK3 mark. The RLR CTR domain maps to alanine 893 to leucine 1020. Positions 907, 910, 962, and 964 each coordinate Zn(2+).

The protein belongs to the helicase family. RLR subfamily. As to quaternary structure, monomer in the absence of ligands and homodimerizes in the presence of dsRNA ligands. Can assemble into helical or linear polymeric filaments on long dsRNA. Interacts with MAVS/IPS1. Interacts (via the CARD domains) with TKFC, the interaction is inhibited by viral infection. Interacts with PCBP2. Interacts with NLRC5. Interacts with PIAS2-beta. Interacts with DDX60. Interacts with ANKRD17. Interacts with IKBKE. Interacts with ATG5 and ATG12, either as ATG5 and ATG12 monomers or as ATG12-ATG5 conjugates. Interacts with ZCCHC3; leading to activate IFIH1/MDA5. Interacts with RNF123. Interacts with DDX3X. Interacts with NOD1; this interaction promotes transcription of antiviral genes and inhibition of viral replication. Interacts with ECSIT; this interaction bridges IFIH1 to the MAVS complex at the mitochondrion. In terms of processing, during apoptosis, processed into 3 cleavage products. The helicase-containing fragment, once liberated from the CARD domains, translocate from the cytoplasm to the nucleus. The processed protein significantly sensitizes cells to DNA degradation. Sumoylated. Sumoylation positively regulates its role in type I interferon induction and is enhanced by PIAS2-beta. Post-translationally, ubiquitinated by RNF125, leading to its degradation by the proteasome. USP17/UPS17L2-dependent deubiquitination positively regulates the receptor. Ubiquitinated by TRIM25 via 'Lys-63'-linked ubiquitination, promoting activation of IFIH1/MDA5. Ubiquitinated by TRIM40 via 'Lys-48'-linked ubiquitination; leading to proteasomal degradation. Ubiquitinated by TRIM65 via 'Lys-63'-linked ubiquitination, promoting activation of IFIH1/MDA5. In terms of processing, ISGylated by ISG15. ISGylation increases upon infection with viruses. ISGylation at Lys-23 and Lys-43 is dependent of dephosphorylation, regulates mitochondrial translocation and oligomerization. Essential for IFIH1/MDA5-mediated cytokine responses and restriction of virus replication. Phosphorylated. Dephosphorylated by phsophatases PP1; dephosphorylation precedes and is required for ISGylation. As to expression, expression is prominent in lung, liver, kidney, heart and spleen (at protein level). Widely expressed at low level.

Its subcellular location is the cytoplasm. The protein localises to the nucleus. It is found in the mitochondrion. It catalyses the reaction ATP + H2O = ADP + phosphate + H(+). In terms of biological role, innate immune receptor which acts as a cytoplasmic sensor of viral nucleic acids and plays a major role in sensing viral infection and in the activation of a cascade of antiviral responses including the induction of type I interferons and pro-inflammatory cytokines. Its ligands include mRNA lacking 2'-O-methylation at their 5' cap and long-dsRNA (&gt;1 kb in length). Upon ligand binding it associates with mitochondria antiviral signaling protein (MAVS/IPS1) which activates the IKK-related kinases: TBK1 and IKBKE which phosphorylate interferon regulatory factors: IRF3 and IRF7 which in turn activate transcription of antiviral immunological genes, including interferons (IFNs); IFN-alpha and IFN-beta. Responsible for detecting the Picornaviridae family members such as encephalomyocarditis virus (EMCV), mengo encephalomyocarditis virus (ENMG), and theiler's murine encephalomyelitis virus (TMEV). Can also detect other viruses such as dengue virus (DENV), west Nile virus (WNV), and reovirus. Also involved in antiviral signaling in response to viruses containing a dsDNA genome, such as vaccinia virus. Plays an important role in amplifying innate immune signaling through recognition of RNA metabolites that are produced during virus infection by ribonuclease L (RNase L). May play an important role in enhancing natural killer cell function and may be involved in growth inhibition and apoptosis in several tumor cell lines. This is Interferon-induced helicase C domain-containing protein 1 from Mus musculus (Mouse).